The sequence spans 164 residues: Nucleotide-binding protein Daro_3028 (164 aa).

It belongs to the YajQ family.

Nucleotide-binding protein. This Dechloromonas aromatica (strain RCB) protein is Nucleotide-binding protein Daro_3028.